Consider the following 49-residue polypeptide: Large ribosomal subunit protein bL33B (49 aa).

The protein belongs to the bacterial ribosomal protein bL33 family.

The protein is Large ribosomal subunit protein bL33B (rpmG2) of Lactococcus lactis subsp. cremoris (Streptococcus cremoris).